Consider the following 498-residue polypeptide: Probable malate:quinone oxidoreductase (498 aa).

The protein belongs to the MQO family. FAD serves as cofactor.

It carries out the reaction (S)-malate + a quinone = a quinol + oxaloacetate. It participates in carbohydrate metabolism; tricarboxylic acid cycle; oxaloacetate from (S)-malate (quinone route): step 1/1. This chain is Probable malate:quinone oxidoreductase, found in Granulibacter bethesdensis (strain ATCC BAA-1260 / CGDNIH1).